The following is a 346-amino-acid chain: Small ribosomal subunit biogenesis GTPase RsgA (346 aa).

Positions 1–26 (MAKRKLTQNQTRRIQSNNAKTLHRHK) are disordered. Positions 7 to 20 (TQNQTRRIQSNNAK) are enriched in polar residues. Positions 103-271 (ENEISRPDYY…LIDSPGIREF (169 aa)) constitute a CP-type G domain. GTP is bound by residues 159-162 (NKVD) and 213-221 (GQSGVGKSS). Zn(2+) is bound by residues Cys295, Cys300, His302, and Cys308.

The protein belongs to the TRAFAC class YlqF/YawG GTPase family. RsgA subfamily. In terms of assembly, monomer. Associates with 30S ribosomal subunit, binds 16S rRNA. Zn(2+) is required as a cofactor.

It is found in the cytoplasm. Functionally, one of several proteins that assist in the late maturation steps of the functional core of the 30S ribosomal subunit. Helps release RbfA from mature subunits. May play a role in the assembly of ribosomal proteins into the subunit. Circularly permuted GTPase that catalyzes slow GTP hydrolysis, GTPase activity is stimulated by the 30S ribosomal subunit. This chain is Small ribosomal subunit biogenesis GTPase RsgA, found in Haemophilus influenzae (strain 86-028NP).